The following is a 121-amino-acid chain: Large ribosomal subunit protein uL14 (121 aa).

It belongs to the universal ribosomal protein uL14 family. As to quaternary structure, part of the 50S ribosomal subunit. Forms a cluster with proteins L3 and L19. In the 70S ribosome, L14 and L19 interact and together make contacts with the 16S rRNA in bridges B5 and B8.

Functionally, binds to 23S rRNA. Forms part of two intersubunit bridges in the 70S ribosome. The protein is Large ribosomal subunit protein uL14 of Prochlorococcus marinus (strain MIT 9313).